The following is a 451-amino-acid chain: Proton-coupled amino acid transporter-like protein acs (451 aa).

At 1-48 the chain is on the cytoplasmic side; that stretch reads MNDDIKTVTVYPTTLELTTPTKSANGSNDDYDPHQHRELKNPTTNFQT. Residues 49-69 traverse the membrane as a helical segment; sequence FAHFLKASVGTGVLAMPSAFA. At 70-80 the chain is on the extracellular side; the sequence is HAGYVNGTLLT. Asn-75 carries an N-linked (GlcNAc...) asparagine glycan. The chain crosses the membrane as a helical span at residues 81 to 101; the sequence is LIIGSLALYCLHILIKCMYIL. Over 102-136 the chain is Cytoplasmic; that stretch reads CKRQRVPYVSFSQAMNLGLKQGPPWLRCLAPIAVP. Residues 137–157 traverse the membrane as a helical segment; sequence FVDGFLAFYHFGICCVYVVFI. Over 158-167 the chain is Extracellular; the sequence is AESIKQLVDE. Residues 168 to 188 traverse the membrane as a helical segment; sequence YLVVWDVRIHMCIIIVPLLLI. Topologically, residues 189 to 199 are cytoplasmic; the sequence is YSIKNLKLLAP. The helical transmembrane segment at 200–220 threads the bilayer; that stretch reads FSSAANLLLLVGFGIILYYIF. The Extracellular segment spans residues 221 to 237; sequence EELPPLSERDPFVAAGK. Residues 238–258 traverse the membrane as a helical segment; sequence LPTFFGTVLFALEAVGVILAI. Topologically, residues 259–272 are cytoplasmic; sequence EENMATPKSFVGPC. A helical membrane pass occupies residues 273–293; it reads GILNSGMSIVLGLYVLLGFFG. Residues 294–320 lie on the Extracellular side of the membrane; the sequence is YWKYGNESEGSITLNIPQSEIPAQVVK. N-linked (GlcNAc...) asparagine glycosylation is present at Asn-299. The helical transmembrane segment at 321–341 threads the bilayer; it reads VFFAITTWISYALQGYVTAHI. Over 342–357 the chain is Cytoplasmic; the sequence is LWDKYLAKRFKETRQT. The helical transmembrane segment at 358-378 threads the bilayer; it reads FYELIFRAIIVLLTFGCAVAI. Residues 379 to 382 lie on the Extracellular side of the membrane; sequence PDLS. A helical membrane pass occupies residues 383–403; that stretch reads VFLSLVGSFCLSILGLIFPVL. Residues 404 to 420 lie on the Cytoplasmic side of the membrane; that stretch reads LQICVQYTEGYGPFRIK. The helical transmembrane segment at 421 to 441 threads the bilayer; sequence LIINLLLLCFGIFGGVVGTYV. The Extracellular portion of the chain corresponds to 442–451; the sequence is SILDIIAVYK.

Belongs to the amino acid/polyamine transporter 2 family. Expressed in the proximal and distal regions of the midgut; expressed in enterocytes and progenitor cells. Expression increases in response to intestinal bacterial infection and spreads further into the midgut, eventually covering the entire midgut.

The protein resides in the cell membrane. The protein localises to the late endosome membrane. It is found in the lysosome membrane. Its subcellular location is the basal cell membrane. Functionally, amino acid transporter which has pH-dependent electrogenic transport activity for alanine, glycine and proline. Plays a role in positive regulation of growth by directly or indirectly modulating the effects of the TOR signaling pathway. Required in enterocytes for the efficient recovery of gut epithelium following the cytoplasmic purge response to bacterial infection. Acts cell-autonomously to promote the retrograde transport of amino acids into the intestinal epithelium. Acts non-cell-autonomously through the insulin signaling pathway to stimulate Myc expression and the release of amino acids from nutrient stores into the hemolymph. The chain is Proton-coupled amino acid transporter-like protein acs from Drosophila melanogaster (Fruit fly).